We begin with the raw amino-acid sequence, 101 residues long: STAS-domain containing protein PA14_20770 (101 aa).

One can recognise an STAS domain in the interval 14 to 101 (LTIQIQGRFD…SNFEQLFKIS (88 aa)).

Post-translationally, phosphorylated on a serine residue, possibly on Ser-56.

Its subcellular location is the secreted. The chain is STAS-domain containing protein PA14_20770 from Pseudomonas aeruginosa (strain UCBPP-PA14).